We begin with the raw amino-acid sequence, 538 residues long: Guanine nucleotide-binding protein-like 3 (538 aa).

Residues 1 to 45 are compositionally biased toward basic residues; sequence MKRPKLKKASKRMTCHKRYKIQKKVREHHRKLRKEAKKRGHKKPR. Disordered regions lie at residues 1-57 and 69-126; these read MKRP…APFK and QQLE…NPKK. Residues 2-46 are basic; the sequence is KRPKLKKASKRMTCHKRYKIQKKVREHHRKLRKEAKKRGHKKPRK. The stretch at 54 to 95 forms a coiled coil; sequence APFKEALLREAELRKQQLEELKQQQKLDRQKEQERKRKLEVS. Over residues 69 to 93 the composition is skewed to basic and acidic residues; that stretch reads QQLEELKQQQKLDRQKEQERKRKLE. At lysine 79 the chain carries N6-acetyllysine. Lysine 91 is covalently cross-linked (Glycyl lysine isopeptide (Lys-Gly) (interchain with G-Cter in SUMO2)). Phosphoserine occurs at positions 95 and 101. Positions 114–126 are enriched in basic residues; that stretch reads RKKAKAGKQNPKK. One can recognise a CP-type G domain in the interval 129–307; sequence CQELKKVIEA…IIDSPCLIIS (179 aa). Residue 176 to 179 coordinates GTP; the sequence is NKSD. Glycyl lysine isopeptide (Lys-Gly) (interchain with G-Cter in SUMO2) cross-links involve residues lysine 177, lysine 248, lysine 262, and lysine 270. 256–263 is a binding site for GTP; that stretch reads GFPNVGKS. The tract at residues 277 to 451 is intermediate; sequence VGISMGLTRS…HLTNRILFRS (175 aa). 300–303 contributes to the GTP binding site; that stretch reads DSPC. Positions 460–475 are enriched in basic and acidic residues; it reads DEKDIVEESPRQTEDK. The segment at 460-532 is acidic; it reads DEKDIVEESP…RASQEDETYD (73 aa). The tract at residues 460 to 538 is disordered; the sequence is DEKDIVEESP…ETYDFTTDYI (79 aa). 3 positions are modified to phosphoserine: serine 493, serine 505, and serine 518. Over residues 506–518 the composition is skewed to polar residues; the sequence is PEQSTAGKPSDGS.

The protein belongs to the TRAFAC class YlqF/YawG GTPase family. In terms of assembly, interacts with MDM2; this interaction stabilizes MDM2. Interaction with MDM2 occurs in the nucleoplasm and is triggered by a nucleolar release mechanism, such as mitosis-induced nucleolar disassembly. Indirectly interacts with TP53, via MDM2-binding. Interacts with TSC22D1 isoform 2. Expressed in the adult bone marrow population that is enriched in hematopoietic stem cells.

It is found in the nucleus. The protein localises to the nucleolus. May be required to maintain the proliferative capacity of stem cells. Stabilizes MDM2 by preventing its ubiquitination, and hence proteasomal degradation. This is Guanine nucleotide-binding protein-like 3 (Gnl3) from Mus musculus (Mouse).